The primary structure comprises 498 residues: MAPRKDFEDKATVPIQPVPGKRGYEFGGPLGAFVFIFGLSTLIYCLTFLCNDVSGCPVPSLLNPSTLSLDKLKEEAGWPQEGLKAFFDVRVTVWVLSYYVLSLVLYVFLPGEVVEGTELACKGRLRYKFNALPSAILILGGLALGTYMHGADFVVWTFLWDNYVQIITANLIICVVLAIFVYARSFSIPAPGQPNPELRELAPGGHSGNALYDFFIGRELNPRVQLPIPFVDEASRTIDINVWCEMRPGLLGWIILNLSNIARQYRTYGYITNSIVLSTVFQTFYVLDALYMEPAVLTTMDVIMDGFGYMLSFGHLVWVPFIYNIQTRYLAVFPLELRLREILLILAVTGAGYAIFRGANNQKNRFRRDPSDPRMMHIKYIQTSSGSKLMISGWWGLARHINYLGDWLMSWSYSLPTGIAGYTIIESINSSGDMQKQAIQTPEVRGWGMIFTYFFLVYFGALLIHREGRDEEKCKSKYGTDWERYTSIVRSRIIPGIY.

4 consecutive transmembrane segments (helical) span residues 30–50, 91–111, 136–156, and 163–183; these read LGAFVFIFGLSTLIYCLTFLC, VTVWVLSYYVLSLVLYVFLPG, ILILGGLALGTYMHGADFVVW, and YVQIITANLIICVVLAIFVYA. A glycan (N-linked (GlcNAc...) asparagine) is linked at N257. 3 helical membrane passes run 275–295, 302–322, and 339–359; these read IVLSTVFQTFYVLDALYMEPA, VIMDGFGYMLSFGHLVWVPFI, and LREILLILAVTGAGYAIFRGA. NADP(+)-binding positions include K363, R367, W395, and 402-403; that span reads NY. N-linked (GlcNAc...) asparagine glycosylation is present at N429. The chain crosses the membrane as a helical span at residues 444–464; sequence VRGWGMIFTYFFLVYFGALLI. NADP(+) contacts are provided by residues D470, 474–478, and Y485; that span reads CKSKY.

The protein belongs to the ERG4/ERG24 family.

Its subcellular location is the endoplasmic reticulum membrane. It functions in the pathway steroid metabolism; ergosterol biosynthesis. Delta(14)-sterol reductase; part of the third module of ergosterol biosynthesis pathway that includes the late steps of the pathway. Catalyzes the reduction of the C14=C15 double bond within 4,4,24-trimethyl ergosta-8,14,24(28)-trienolto produce 4,4-dimethylfecosterol. The third module or late pathway involves the ergosterol synthesis itself through consecutive reactions that mainly occur in the endoplasmic reticulum (ER) membrane. Firstly, the squalene synthase erg9 catalyzes the condensation of 2 farnesyl pyrophosphate moieties to form squalene, which is the precursor of all steroids. Squalene synthase is crucial for balancing the incorporation of farnesyl diphosphate (FPP) into sterol and nonsterol isoprene synthesis. Secondly, squalene is converted into lanosterol by the consecutive action of the squalene epoxidase erg1 and the lanosterol synthase erg7. Then, the delta(24)-sterol C-methyltransferase erg6 methylates lanosterol at C-24 to produce eburicol. Eburicol is the substrate of the sterol 14-alpha demethylase encoded by cyp51A and cyp51B, to yield 4,4,24-trimethyl ergosta-8,14,24(28)-trienol. The C-14 reductase erg24 then reduces the C14=C15 double bond which leads to 4,4-dimethylfecosterol. A sequence of further demethylations at C-4, involving the C-4 demethylation complex containing the C-4 methylsterol oxidases erg25A or erg25B, the sterol-4-alpha-carboxylate 3-dehydrogenase erg26 and the 3-keto-steroid reductase erg27, leads to the production of fecosterol via 4-methylfecosterol. The C-8 sterol isomerase erg2 then catalyzes the reaction which results in unsaturation at C-7 in the B ring of sterols and thus converts fecosterol to episterol. The sterol-C5-desaturase erg3B then catalyzes the introduction of a C-5 double bond in the B ring to produce 5-dehydroepisterol. The 2 other sterol-C5-desaturases, erg3A and erg3C, seem to be less important in ergosterol biosynthesis. The C-22 sterol desaturase erg5 further converts 5-dehydroepisterol into ergosta-5,7,22,24(28)-tetraen-3beta-ol by forming the C-22(23) double bond in the sterol side chain. Finally, ergosta-5,7,22,24(28)-tetraen-3beta-ol is substrate of the C-24(28) sterol reductases erg4A and erg4B to produce ergosterol. Possible alternative sterol biosynthetic pathways might exist from fecosterol to ergosterol, depending on the activities of the erg3 isoforms. The chain is Delta(14)-sterol reductase erg24A from Aspergillus fumigatus (strain ATCC MYA-4609 / CBS 101355 / FGSC A1100 / Af293) (Neosartorya fumigata).